We begin with the raw amino-acid sequence, 571 residues long: Coenzyme A biosynthesis protein 3 (571 aa).

Disordered regions lie at residues 1–72 (MTDE…YKND) and 100–120 (INTS…PSLP). The span at 8–35 (SDQNMNGKQGVNLISSLPTTQVPVSILT) shows a compositional bias: polar residues. A Phosphoserine modification is found at serine 42. Residues 43 to 59 (IHDESNFERSDSHEDQS) are compositionally biased toward basic and acidic residues. Over residues 60–72 (KSNSNRRNIYKND) the composition is skewed to polar residues. Phosphoserine occurs at positions 116, 121, and 124. Disordered stretches follow at residues 140–171 (ISNK…LQEQ) and 209–244 (IFKE…SMEK). Over residues 146-171 (KQQQQQEQLQQNQQQEEQQKAQLQEQ) the composition is skewed to low complexity. Serine 264 bears the Phosphoserine mark. Positions 507–571 (RDEETGDKEQ…EDEEDVKTEV (65 aa)) are disordered. Positions 516–571 (QEQEEQEGADNEDDDDEDDEEDEEDEEEEEALNETASDESNDEEDEEDEEDVKTEV) are enriched in acidic residues.

Belongs to the HFCD (homooligomeric flavin containing Cys decarboxylase) superfamily. As to quaternary structure, component of the phosphopantothenoylcysteine decarboxylase (PPCDC) complex, a heterotrimer composed of CAB3, HAL3 and VHS3.

Its subcellular location is the cytoplasm. Functionally, component of the phosphopantothenoylcysteine decarboxylase (PPCDC) involved in the coenzyme A synthesis. In Saccharomyces cerevisiae (strain ATCC 204508 / S288c) (Baker's yeast), this protein is Coenzyme A biosynthesis protein 3 (CAB3).